The chain runs to 245 residues: Phycocyanobilin:ferredoxin oxidoreductase (245 aa).

This sequence belongs to the HY2 family.

The enzyme catalyses (2R,3Z)-phycocyanobilin + 4 oxidized [2Fe-2S]-[ferredoxin] = biliverdin IXalpha + 4 reduced [2Fe-2S]-[ferredoxin] + 4 H(+). In terms of biological role, catalyzes the four-electron reduction of biliverdin IX-alpha (2-electron reduction at both the A and D rings); the reaction proceeds via an isolatable 2-electron intermediate, 181,182-dihydrobiliverdin. This Microcystis aeruginosa (strain NIES-843 / IAM M-2473) protein is Phycocyanobilin:ferredoxin oxidoreductase.